The sequence spans 142 residues: Lutropin subunit beta (142 aa).

A signal peptide spans 1 to 21 (MEMLQGLLLLWLLLNVGGVWT). 6 cysteine pairs are disulfide-bonded: Cys-30–Cys-78, Cys-44–Cys-93, Cys-47–Cys-131, Cys-55–Cys-109, Cys-59–Cys-111, and Cys-114–Cys-121. N-linked (GlcNAc...) asparagine glycosylation is present at Asn-34.

The protein belongs to the glycoprotein hormones subunit beta family. Heterodimer of a common alpha chain and a unique beta chain which confers biological specificity to thyrotropin, lutropin, follitropin and gonadotropin.

Its subcellular location is the secreted. Promotes spermatogenesis and ovulation by stimulating the testes and ovaries to synthesize steroids. The polypeptide is Lutropin subunit beta (LHB) (Panthera tigris altaica (Siberian tiger)).